Consider the following 156-residue polypeptide: Deoxyuridine 5'-triphosphate nucleotidohydrolase (156 aa).

Belongs to the dCTP deaminase family. Archaeal dUTPase subfamily. As to quaternary structure, homotrimer.

The enzyme catalyses dUTP + H2O = dUMP + diphosphate + H(+). It functions in the pathway pyrimidine metabolism; dUMP biosynthesis; dUMP from dCTP (dUTP route): step 2/2. Functionally, this enzyme is involved in nucleotide metabolism: it produces dUMP, the immediate precursor of thymidine nucleotides and it decreases the intracellular concentration of dUTP so that uracil cannot be incorporated into DNA. The protein is Deoxyuridine 5'-triphosphate nucleotidohydrolase of Methanocaldococcus jannaschii (strain ATCC 43067 / DSM 2661 / JAL-1 / JCM 10045 / NBRC 100440) (Methanococcus jannaschii).